Here is a 1742-residue protein sequence, read N- to C-terminus: NACHT and WD repeat domain-containing protein 2 (1742 aa).

LRR repeat units follow at residues 386–410 (FYEY…GHIN), 677–698 (LEDV…TRPS), 724–747 (VKNV…LYLQ), 883–906 (YSQE…VTAF), and 925–953 (LPKL…SSMD). Residues 410–737 (NPLIIYGGPC…TLLVWANRHL (328 aa)) form the NACHT domain. WD repeat units lie at residues 963–1004 (LSSS…LLRQ), 1007–1046 (TAQS…LLSE), 1140–1179 (FSGG…SPQL), 1229–1271 (KHNE…ASLQ), 1272–1311 (EISG…AMSN), 1314–1353 (KTGK…IEAV), 1355–1394 (KHEG…NLFR), 1396–1434 (NGQR…RVCN), 1476–1516 (EDGT…ICRR), 1522–1564 (NFLK…VHAS), and 1614–1653 (SLYK…DAAL).

The polypeptide is NACHT and WD repeat domain-containing protein 2 (NWD2) (Homo sapiens (Human)).